We begin with the raw amino-acid sequence, 461 residues long: Cysteine--tRNA ligase (461 aa).

Zn(2+) is bound at residue Cys-28. Residues 30–40 (ITVYDLCHIGH) carry the 'HIGH' region motif. Residues Cys-209, His-234, and Glu-238 each contribute to the Zn(2+) site. The short motif at 266-270 (KMSKS) is the 'KMSKS' region element. Lys-269 serves as a coordination point for ATP.

This sequence belongs to the class-I aminoacyl-tRNA synthetase family. As to quaternary structure, monomer. It depends on Zn(2+) as a cofactor.

It localises to the cytoplasm. It catalyses the reaction tRNA(Cys) + L-cysteine + ATP = L-cysteinyl-tRNA(Cys) + AMP + diphosphate. This Salmonella agona (strain SL483) protein is Cysteine--tRNA ligase.